The chain runs to 417 residues: Serine hydroxymethyltransferase (417 aa).

(6S)-5,6,7,8-tetrahydrofolate contacts are provided by residues L117 and G121–L123. K226 is subject to N6-(pyridoxal phosphate)lysine.

It belongs to the SHMT family. In terms of assembly, homodimer. The cofactor is pyridoxal 5'-phosphate.

The protein resides in the cytoplasm. The enzyme catalyses (6R)-5,10-methylene-5,6,7,8-tetrahydrofolate + glycine + H2O = (6S)-5,6,7,8-tetrahydrofolate + L-serine. The protein operates within one-carbon metabolism; tetrahydrofolate interconversion. Its pathway is amino-acid biosynthesis; glycine biosynthesis; glycine from L-serine: step 1/1. Its function is as follows. Catalyzes the reversible interconversion of serine and glycine with tetrahydrofolate (THF) serving as the one-carbon carrier. This reaction serves as the major source of one-carbon groups required for the biosynthesis of purines, thymidylate, methionine, and other important biomolecules. Also exhibits THF-independent aldolase activity toward beta-hydroxyamino acids, producing glycine and aldehydes, via a retro-aldol mechanism. This is Serine hydroxymethyltransferase from Shouchella clausii (strain KSM-K16) (Alkalihalobacillus clausii).